We begin with the raw amino-acid sequence, 121 residues long: Ribonuclease P protein component (121 aa).

Belongs to the RnpA family. In terms of assembly, consists of a catalytic RNA component (M1 or rnpB) and a protein subunit.

It catalyses the reaction Endonucleolytic cleavage of RNA, removing 5'-extranucleotides from tRNA precursor.. Its function is as follows. RNaseP catalyzes the removal of the 5'-leader sequence from pre-tRNA to produce the mature 5'-terminus. It can also cleave other RNA substrates such as 4.5S RNA. The protein component plays an auxiliary but essential role in vivo by binding to the 5'-leader sequence and broadening the substrate specificity of the ribozyme. This Coxiella burnetii (strain Dugway 5J108-111) protein is Ribonuclease P protein component.